A 1480-amino-acid polypeptide reads, in one-letter code: Cystic fibrosis transmembrane conductance regulator (1480 aa).

Topologically, residues 1-77 are cytoplasmic; that stretch reads MQRSPLEKAS…KLINALRRCF (77 aa). Residues 78–98 traverse the membrane as a helical segment; the sequence is FWRFMFYGIFLYLGEVTKAVQ. Positions 81–365 constitute an ABC transmembrane type-1 1 domain; that stretch reads FMFYGIFLYL…WAVQTWYDSL (285 aa). Topologically, residues 99-122 are extracellular; sequence PLLLGRIIASYDPDNKEERSIAIY. Residues 123-146 form a helical membrane-spanning segment; it reads LGIGLCLLFIVRTLLLHPAIFGLH. The Cytoplasmic segment spans residues 147-195; the sequence is HIGMQMRIAMFSLIYKKTLKLSSRVLDKISIGQLVSLLSNNLNKFDEGL. Residues 196-216 traverse the membrane as a helical segment; the sequence is ALAHFVWIAPLQVALLMGLIW. Over 217-222 the chain is Extracellular; sequence ELLQAS. Residues 223–243 form a helical membrane-spanning segment; it reads AFCGLGFLIVLALFQAGLGRM. The Cytoplasmic segment spans residues 244–298; it reads MMKYRDQRAGKINERLVITSEMIENIQSVKAYCWEEAMEKMIENLRQTELKLTRK. A helical membrane pass occupies residues 299-319; it reads AAYVRYFNSSAFFFSGFFVVF. Topologically, residues 320–339 are extracellular; it reads LSVLPYALIKGIVLRKIFTT. The chain crosses the membrane as a helical span at residues 340-358; the sequence is ISFCIVLRMAVTRQFPWAV. Residues 359 to 858 are Cytoplasmic-facing; it reads QTWYDSLGAI…YLRYITVHKS (500 aa). ATP is bound by residues Trp401, Ser434, 458-465, and Gln493; that span reads GSTGAGKT. Residues 423 to 646 form the ABC transporter 1 domain; it reads NGDDSLFFSN…RPDFSSKLMG (224 aa). Cys524 is lipidated: S-palmitoyl cysteine. Phosphoserine occurs at positions 549 and 660. The segment at 654–831 is disordered R region; the sequence is SAERRNSILT…EEINEEDLKE (178 aa). At Ser670 the chain carries Phosphoserine; by PKA. Lys688 is covalently cross-linked (Glycyl lysine isopeptide (Lys-Gly) (interchain with G-Cter in ubiquitin)). Phosphoserine is present on residues Ser700 and Ser712. Position 717 is a phosphothreonine (Thr717). Ser737, Ser753, Ser768, Ser790, Ser795, and Ser813 each carry phosphoserine. Residues 859 to 879 form a helical membrane-spanning segment; sequence LIFVLIWCLVIFLAEVAASLV. Residues 859–1155 enclose the ABC transmembrane type-1 2 domain; that stretch reads LIFVLIWCLV…AVNSSIDVDS (297 aa). Residues 880-918 are Extracellular-facing; that stretch reads VLWLLGNTPLQDKGNSTHSRNNSYAVIITSTSSYYVFYI. N-linked (GlcNAc...) asparagine glycosylation is found at Asn894 and Asn900. The chain crosses the membrane as a discontinuously helical span at residues 919–939; it reads YVGVADTLLAMGFFRGLPLVH. The Cytoplasmic segment spans residues 940 to 990; sequence TLITVSKILHNKMLHSVLQAPMSTLNTLKAGGILNRFSKDIAILDDLLPLT. Residues 991–1011 form a helical membrane-spanning segment; the sequence is IFDFIQLLLIVIGAIAVVAVL. The Extracellular segment spans residues 1012–1013; the sequence is QP. A helical membrane pass occupies residues 1014–1034; sequence YIFVATVPVIVAFIMLRAYFL. Over 1035 to 1095 the chain is Cytoplasmic; that stretch reads QTSQQLKQLE…TANWFLYLST (61 aa). The helical transmembrane segment at 1096 to 1116 threads the bilayer; sequence LRWFQMRIEMIFVIFFIAVTF. Residues 1117-1130 lie on the Extracellular side of the membrane; sequence ISILTTGEGEGRVG. The chain crosses the membrane as a helical span at residues 1131-1151; that stretch reads IILTLAMNIMSTLQWAVNSSI. Over 1152–1480 the chain is Cytoplasmic; it reads DVDSLMRSVS…TEEEVQDTRL (329 aa). The region spanning 1210–1443 is the ABC transporter 2 domain; sequence MTVKDLTAKY…RSLFQQAISP (234 aa). Residues Tyr1219 and 1244 to 1251 each bind ATP; that span reads GRTGSGKS. The interaction with GORASP2 stretch occupies residues 1386 to 1480; that stretch reads RTLKQAFADC…TEEEVQDTRL (95 aa). Cys1395 carries the S-palmitoyl cysteine lipid modification. 2 positions are modified to phosphoserine: Ser1444 and Ser1456. Residues 1452-1480 form a disordered region; sequence HRNSSKCKSKPQIAALKEETEEEVQDTRL. Over residues 1470–1480 the composition is skewed to acidic residues; sequence ETEEEVQDTRL. The short motif at 1478–1480 is the PDZ-binding element; that stretch reads TRL.

Belongs to the ABC transporter superfamily. ABCC family. CFTR transporter (TC 3.A.1.202) subfamily. In terms of assembly, monomer; does not require oligomerization for channel activity. May form oligomers in the membrane. Interacts with SLC26A3, SLC26A6 and NHERF1. Interacts with SHANK2. Interacts with MYO6. Interacts (via C-terminus) with GOPC (via PDZ domain); this promotes CFTR internalization and thereby decreases channel activity. Interacts with SLC4A7 through NHERF1. Found in a complex with MYO5B and RAB11A. Interacts with ANO1. Interacts with SLC26A8. Interacts with AHCYL1; the interaction increases CFTR activity. Interacts with CSE1L. The core-glycosylated form interacts with GORASP2 (via PDZ GRASP-type 1 domain) in respone to ER stress. Interacts with MARCHF2; the interaction leads to CFTR ubiqtuitination and degradation. Interacts with ADGRG2. N-glycosylated. In terms of processing, phosphorylated; cAMP treatment promotes phosphorylation and activates the channel. Dephosphorylation decreases the ATPase activity (in vitro). Phosphorylation at PKA sites activates the channel. Phosphorylation at PKC sites enhances the response to phosphorylation by PKA. Phosphorylated by AMPK; this inhibits channel activity. Post-translationally, ubiquitinated, leading to its degradation in the lysosome. Deubiquitination by USP10 in early endosomes enhances its endocytic recycling to the cell membrane. Ubiquitinated by RNF185 during ER stress. Ubiquitinated by MARCHF2.

It localises to the apical cell membrane. The protein localises to the early endosome membrane. It is found in the cell membrane. Its subcellular location is the recycling endosome membrane. The protein resides in the endoplasmic reticulum membrane. It localises to the nucleus. It carries out the reaction ATP + H2O + closed Cl(-) channel = ADP + phosphate + open Cl(-) channel.. The catalysed reaction is chloride(in) = chloride(out). The enzyme catalyses hydrogencarbonate(in) = hydrogencarbonate(out). It catalyses the reaction ATP + H2O = ADP + phosphate + H(+). Functionally, epithelial ion channel that plays an important role in the regulation of epithelial ion and water transport and fluid homeostasis. Mediates the transport of chloride ions across the cell membrane. Possesses an intrinsic ATPase activity and utilizes ATP to gate its channel; the passive flow of anions through the channel is gated by cycles of ATP binding and hydrolysis by the ATP-binding domains. The ion channel is also permeable to HCO(3)(-); selectivity depends on the extracellular chloride concentration. Exerts its function also by modulating the activity of other ion channels and transporters. Contributes to the regulation of the pH and the ion content of the epithelial fluid layer. Modulates the activity of the epithelial sodium channel (ENaC) complex, in part by regulating the cell surface expression of the ENaC complex. May regulate bicarbonate secretion and salvage in epithelial cells by regulating the transporter SLC4A7. Can inhibit the chloride channel activity of ANO1. Plays a role in the chloride and bicarbonate homeostasis during sperm epididymal maturation and capacitation. The polypeptide is Cystic fibrosis transmembrane conductance regulator (Pongo abelii (Sumatran orangutan)).